The primary structure comprises 269 residues: Phosphate import ATP-binding protein PstB (269 aa).

Residues 22–264 enclose the ABC transporter domain; the sequence is IKVKNVDFFY…PANKKTEDYI (243 aa). 55–62 contacts ATP; that stretch reads GSSGSGKS.

Belongs to the ABC transporter superfamily. Phosphate importer (TC 3.A.1.7) family. The complex is composed of two ATP-binding proteins (PstB), two transmembrane proteins (PstC and PstA) and a solute-binding protein (PstS).

It localises to the cell membrane. The enzyme catalyses phosphate(out) + ATP + H2O = ADP + 2 phosphate(in) + H(+). In terms of biological role, part of the ABC transporter complex PstSACB involved in phosphate import. Responsible for energy coupling to the transport system. This chain is Phosphate import ATP-binding protein PstB, found in Spiroplasma kunkelii.